Here is a 441-residue protein sequence, read N- to C-terminus: MSISYTGQLPTTSPLSLTQLITSDRYQQVIENADAARARVREQLKHAKKTGATEANGDIMPVIKALEEYMPHITSIVDNEGVFRFTSQIITCWRLPFQSQSSMANKTPLHGLSFEYIMVLFTYALALATLANQYVARDKEDRWKHASAYISKARGVVDYLRQCRSFQIICNEPPASVPRDLSSATMSALSHMLCGASHMLILYKCDAETYLDGGAPSAGANSGGFSSSLLLRTAIFARDQFETASALLGEPVSKRKLVTSLVKEKSSKFSLSKKLHLRKDDGSPSLAPVSSFESNRDLSSTSSGTLDSLLSWLSRARGVAEGFVFKHMAIQAYENNQIGKAVGAAYAAILQLEDVKIPQKSALYIPVTHLKETLNRHHADYKADNDRLSFEPVPSPSELAQEWPSGRQVISAQKWTPQTSLDLGEDTSSSAPKYSGQGSYY.

Residues 3–352 (ISYTGQLPTT…GAAYAAILQL (350 aa)) enclose the BRO1 domain. Disordered stretches follow at residues 278–304 (RKDD…TSSG) and 414–441 (KWTP…GSYY).

The protein belongs to the palC family.

Functionally, required for the proteolytic cleavage of the transcription factor RIM101 in response to alkaline ambient pH. The sequence is that of pH-response regulator protein palC from Yarrowia lipolytica (strain CLIB 122 / E 150) (Yeast).